We begin with the raw amino-acid sequence, 456 residues long: Transforming growth factor beta-1-induced transcript 1 protein (456 aa).

Residue M1 is modified to N-acetylmethionine. A disordered region spans residues 1–79 (MEDLDALLSD…ATPPFSSSCG (79 aa)). A transcription activation region spans residues 1 to 195 (MEDLDALLSD…DTPSPPGPTS (195 aa)). The segment at 1–235 (MEDLDALLSD…CNKPIAGQVV (235 aa)) is interaction with PTK2B/PYK2. Residues 3 to 15 (DLDALLSDLETTT) carry the LD motif 1 motif. T33 carries the post-translational modification Phosphothreonine. Position 55 is a phosphotyrosine (Y55). Position 63 is a phosphoserine (S63). An interaction with PTK2/FAK1 region spans residues 78–131 (CGVLGTGLCELDRLLQELNATQFNITDEIMSQFPSSKETAGEQKEDQSEDKKRP). Positions 87–99 (ELDRLLQELNATQ) match the LD motif 2 motif. The tract at residues 109–146 (QFPSSKETAGEQKEDQSEDKKRPSPPPSPSPVLPKPSA) is disordered. The span at 116 to 130 (TAGEQKEDQSEDKKR) shows a compositional bias: basic and acidic residues. Phosphoserine is present on residues S132, S136, S138, S159, S181, and S189. Pro residues predominate over residues 132–142 (SPPPSPSPVLP). Residues 152-163 (ELDRLMASLSDF) carry the LD motif 3 motif. Positions 166–200 (QNHLPASGPTPPPVPSSMSEDTPSPPGPTSKGSLD) are disordered. An LD motif 4 motif is present at residues 198–210 (SLDTMLGLLQSDL). LIM zinc-binding domains follow at residues 221–280 (GLCG…RFSP), 281–338 (RCGL…QLFA), 339–398 (PRCQ…RRGS), and 399–456 (LCAT…KLFG). A Phosphoserine modification is found at S398. Phosphothreonine is present on T402.

Belongs to the paxillin family. As to quaternary structure, homooligomer. Interacts with CRIP2, HSPB1, ILK, LIMS1, LIMS2, NCK2, NUDT16L1, PAK, PPARG, PTPN12, TCF3, TCF7L2 and VCL. Forms a complex with GIT1 and ARHGEF7. Interacts with AR/androgen receptor in a ligand-dependent manner. Interacts with CSK, LYN, MAPK15, NR3C1, PPARG, PTK2/FAK1, PTK2B/PYK2, SLC6A3, SLC6A4, SMAD3, SRC and talin. Interacts (via LIM zinc-binding domain 2) with CBLC (via RING-type zinc finger); the interaction is direct and enhances CBLC E3 ubiquitin-protein ligase activity. Post-translationally, phosphorylated by gonadotropin-releasing hormone-activated SRC.

It is found in the cell junction. It localises to the focal adhesion. Its subcellular location is the nucleus matrix. The protein localises to the cytoplasm. The protein resides in the cytoskeleton. Its function is as follows. Functions as a molecular adapter coordinating multiple protein-protein interactions at the focal adhesion complex and in the nucleus. Links various intracellular signaling modules to plasma membrane receptors and regulates the Wnt and TGFB signaling pathways. May also regulate SLC6A3 and SLC6A4 targeting to the plasma membrane hence regulating their activity. In the nucleus, functions as a nuclear receptor coactivator regulating glucocorticoid, androgen, mineralocorticoid and progesterone receptor transcriptional activity. May play a role in the processes of cell growth, proliferation, migration, differentiation and senescence. May have a zinc-dependent DNA-binding activity. The protein is Transforming growth factor beta-1-induced transcript 1 protein (TGFB1I1) of Bos taurus (Bovine).